A 348-amino-acid polypeptide reads, in one-letter code: CCAAT/enhancer-binding protein beta (348 aa).

The interval 1 to 24 (MQRLVVWDPVCLPLPPPPPAFKSM) is required for Lys-174 sumoylation. At Arg3 the chain carries Asymmetric dimethylarginine; by CARM1. Residues 24–135 (MEVANFYYEA…YGGKNCKKAA (112 aa)) are required for MYC transcriptional repression. Lys43 carries the post-translational modification N6-acetyllysine; alternate. Lys43 bears the N6-methylated lysine; alternate mark. Disordered stretches follow at residues 44 to 65 (AAPA…ELGS) and 79 to 112 (LEPL…ASSG). Over residues 47 to 59 (AAPPADRPGPRPP) the composition is skewed to pro residues. The 9aaTAD signature appears at 116–124 (DFLSDLFSD). N6-acetyllysine; by KAT2A and KAT2B is present on residues Lys129 and Lys132. Lys133 is subject to N6-acetyllysine; by KAT2A and KAT2B; alternate. Lys133 participates in a covalent cross-link: Glycyl lysine isopeptide (Lys-Gly) (interchain with G-Cter in SUMO2); alternate. The interval 158–178 (APLHPPPPPPPPPAELKAEPG) is disordered. Residues 160–171 (LHPPPPPPPPPA) show a composition bias toward pro residues. Lys174 is covalently cross-linked (Glycyl lysine isopeptide (Lys-Gly) (interchain with G-Cter in SUMO2); alternate). A Glycyl lysine isopeptide (Lys-Gly) (interchain with G-Cter in SUMO); alternate cross-link involves residue Lys174. Glycyl lysine isopeptide (Lys-Gly) (interchain with G-Cter in SUMO2) cross-links involve residues Lys185 and Lys187. Over residues 219 to 259 (SGSSGSLSTSSSSSPPGTPSPADAKATPAAAACYAGAAPAP) the composition is skewed to low complexity. Positions 219-277 (SGSSGSLSTSSSSSPPGTPSPADAKATPAAAACYAGAAPAPSQVKSKAKKTVDKHSDEY) are disordered. Thr227 carries the phosphothreonine; by GSK3-beta modification. O-linked (GlcNAc) serine glycosylation is found at Ser228 and Ser229. Ser232 is modified (phosphoserine; by GSK3-beta). Thr236 is modified (phosphothreonine; by RPS6KA1, CDK2 and MAPK). Residues Lys263 and Lys265 each participate in a glycyl lysine isopeptide (Lys-Gly) (interchain with G-Cter in SUMO2) cross-link. The span at 268–277 (KTVDKHSDEY) shows a compositional bias: basic and acidic residues. The residue at position 269 (Thr269) is a Phosphothreonine; by RPS6KA1 and PKC/PRKCA. One can recognise a bZIP domain in the interval 274–337 (SDEYKIRRER…STLRNLFKTL (64 aa)). Residues 278–298 (KIRRERNNIAVRKSRDKAKMR) are basic motif. Ser291 bears the Phosphoserine; by PKC/PRKCA mark. Positions 300-307 (LETQHKVL) are leucine-zipper. Ser328 is subject to Phosphoserine; by CaMK2. Lys335 participates in a covalent cross-link: Glycyl lysine isopeptide (Lys-Gly) (interchain with G-Cter in SUMO2).

Belongs to the bZIP family. C/EBP subfamily. In terms of assembly, binds DNA as a homodimer and as a heterodimer. Interacts with ATF4. Binds DNA as a heterodimer with ATF4. Interacts with MYB; within the complex, MYB and CEBPB bind to different promoter regions. Can form stable heterodimers with CEBPA, CEBPD and CEBPG. Interacts with SIX1. Interacts with TRIM28 and PTGES2. Interacts with PRDM16. Interacts with CCDC85B. Forms a complex with THOC5. Interacts with ZNF638; this interaction increases transcriptional activation. Interacts with CIDEA and CIDEC; these interactions increase transcriptional activation of a subset of CEBPB downstream target genes. Interacts with DDIT3/CHOP. Interacts with EP300; recruits EP300 to chromatin. Interacts with RORA; the interaction disrupts interaction with EP300. Interacts (not methylated) with MED23, MED26, SMARCA2, SMARCB1 and SMARCC1. Interacts with KAT2A and KAT2B. Interacts with ATF5; EP300 is required for ATF5 and CEBPB interaction and DNA binding. Interacts with NFE2L1; the heterodimer represses expression of DSPP during odontoblast differentiation. Methylated. Methylation at Arg-3 by CARM1 and at Lys-43 by EHMT2 inhibit transactivation activity. Methylation is probably inhibited by phosphorylation at Thr-236. In terms of processing, sumoylated by polymeric chains of SUMO2 or SUMO3. Sumoylation at Lys-174 is required for inhibition of T-cells proliferation. In adipocytes, sumoylation at Lys-174 by PIAS1 leads to ubiquitination and subsequent proteasomal degradation. Desumoylated by SENP2, which abolishes ubiquitination and stabilizes protein levels. Post-translationally, ubiquitinated, leading to proteasomal degradation. Phosphorylated at Thr-236 by MAPK and CDK2, serves to prime phosphorylation at Thr-227 and Ser-232 by GSK3B and acquire DNA-binding as well as transactivation activities, required to induce adipogenesis. MAPK and CDK2 act sequentially to maintain Thr-236 in the primed phosphorylated state during mitotical cloning expansion and thereby progression of terminal differentiation. Phosphorylation at Thr-269 enhances transactivation activity. Phosphorylation at Ser-328 in response to calcium increases transactivation activity. Phosphorylated at Thr-236 by RPS6KA1. In terms of processing, O-glycosylated, glycosylation at Ser-228 and Ser-229 prevents phosphorylation on Thr-236, Ser-232 and Thr-227 and DNA binding activity which delays the adipocyte differentiation program. Post-translationally, acetylated. Acetylation at Lys-43 is an important and dynamic regulatory event that contributes to its ability to transactivate target genes, including those associated with adipogenesis and adipocyte function. Deacetylation by HDAC1 represses its transactivation activity. Acetylated by KAT2A and KAT2B within a cluster of lysine residues between amino acids 129-133, this acetylation is strongly induced by glucocorticoid treatment and enhances transactivation activity.

The protein localises to the nucleus. It is found in the cytoplasm. In terms of biological role, important transcription factor regulating the expression of genes involved in immune and inflammatory responses. Also plays a significant role in adipogenesis, as well as in the gluconeogenic pathway, liver regeneration, and hematopoiesis. The consensus recognition site is 5'-T[TG]NNGNAA[TG]-3'. Its functional capacity is governed by protein interactions and post-translational protein modifications. During early embryogenesis, plays essential and redundant roles with CEBPA. Has a promitotic effect on many cell types such as hepatocytes and adipocytes but has an antiproliferative effect on T-cells by repressing MYC expression, facilitating differentiation along the T-helper 2 lineage. Binds to regulatory regions of several acute-phase and cytokines genes and plays a role in the regulation of acute-phase reaction and inflammation. Also plays a role in intracellular bacteria killing. During adipogenesis, is rapidly expressed and, after activation by phosphorylation, induces CEBPA and PPARG, which turn on the series of adipocyte genes that give rise to the adipocyte phenotype. The delayed transactivation of the CEBPA and PPARG genes by CEBPB appears necessary to allow mitotic clonal expansion and thereby progression of terminal differentiation. Essential for female reproduction because of a critical role in ovarian follicle development. Restricts osteoclastogenesis: together with NFE2L1; represses expression of DSPP during odontoblast differentiation. This Bos taurus (Bovine) protein is CCAAT/enhancer-binding protein beta (CEBPB).